The primary structure comprises 133 residues: L-ectoine synthase (133 aa).

It belongs to the ectoine synthase family.

It catalyses the reaction (2S)-4-acetamido-2-aminobutanoate = L-ectoine + H2O. It participates in amine and polyamine biosynthesis; ectoine biosynthesis; L-ectoine from L-aspartate 4-semialdehyde: step 3/3. In terms of biological role, catalyzes the circularization of gamma-N-acetyl-alpha,gamma-diaminobutyric acid (ADABA) to ectoine (1,4,5,6-tetrahydro-2-methyl-4-pyrimidine carboxylic acid), which is an excellent osmoprotectant. In Bordetella petrii (strain ATCC BAA-461 / DSM 12804 / CCUG 43448), this protein is L-ectoine synthase.